The sequence spans 467 residues: Indoleacetamide hydrolase (467 aa).

Active-site charge relay system residues include Lys-74 and Ser-149. Residue Ser-173 is the Acyl-ester intermediate of the active site.

Belongs to the amidase family.

The protein operates within plant hormone metabolism; auxin biosynthesis. Its function is as follows. Hydrolyzes indole-3-acetamide (IAM) into indole-3-acetic acid (IAA). The polypeptide is Indoleacetamide hydrolase (TA-iaaH) (Agrobacterium vitis (Rhizobium vitis)).